A 309-amino-acid chain; its full sequence is Homoserine kinase (309 aa).

Residue 91-101 (PIGSGLGSSAC) coordinates ATP.

This sequence belongs to the GHMP kinase family. Homoserine kinase subfamily.

It localises to the cytoplasm. The catalysed reaction is L-homoserine + ATP = O-phospho-L-homoserine + ADP + H(+). Its pathway is amino-acid biosynthesis; L-threonine biosynthesis; L-threonine from L-aspartate: step 4/5. In terms of biological role, catalyzes the ATP-dependent phosphorylation of L-homoserine to L-homoserine phosphate. This chain is Homoserine kinase, found in Yersinia pseudotuberculosis serotype O:1b (strain IP 31758).